The sequence spans 701 residues: Glycine--tRNA ligase beta subunit (701 aa).

Belongs to the class-II aminoacyl-tRNA synthetase family. In terms of assembly, tetramer of two alpha and two beta subunits.

It is found in the cytoplasm. It carries out the reaction tRNA(Gly) + glycine + ATP = glycyl-tRNA(Gly) + AMP + diphosphate. The polypeptide is Glycine--tRNA ligase beta subunit (Helicobacter pylori (strain G27)).